Reading from the N-terminus, the 148-residue chain is SsrA-binding protein (148 aa).

A disordered region spans residues 129 to 148 (ETEKDRDWQREKARLMREKA).

It belongs to the SmpB family.

The protein resides in the cytoplasm. In terms of biological role, required for rescue of stalled ribosomes mediated by trans-translation. Binds to transfer-messenger RNA (tmRNA), required for stable association of tmRNA with ribosomes. tmRNA and SmpB together mimic tRNA shape, replacing the anticodon stem-loop with SmpB. tmRNA is encoded by the ssrA gene; the 2 termini fold to resemble tRNA(Ala) and it encodes a 'tag peptide', a short internal open reading frame. During trans-translation Ala-aminoacylated tmRNA acts like a tRNA, entering the A-site of stalled ribosomes, displacing the stalled mRNA. The ribosome then switches to translate the ORF on the tmRNA; the nascent peptide is terminated with the 'tag peptide' encoded by the tmRNA and targeted for degradation. The ribosome is freed to recommence translation, which seems to be the essential function of trans-translation. This is SsrA-binding protein from Ralstonia nicotianae (strain ATCC BAA-1114 / GMI1000) (Ralstonia solanacearum).